A 648-amino-acid chain; its full sequence is Threonine--tRNA ligase (648 aa).

Residues 1–61 (MIKITLPDGS…TTDGSLVLYT (61 aa)) enclose the TGS domain. A catalytic region spans residues 240–539 (DHRKLGKELE…LLEHTAGNFP (300 aa)). Residues C335, H386, and H516 each coordinate Zn(2+).

The protein belongs to the class-II aminoacyl-tRNA synthetase family. As to quaternary structure, homodimer. The cofactor is Zn(2+).

The protein localises to the cytoplasm. The catalysed reaction is tRNA(Thr) + L-threonine + ATP = L-threonyl-tRNA(Thr) + AMP + diphosphate + H(+). Catalyzes the attachment of threonine to tRNA(Thr) in a two-step reaction: L-threonine is first activated by ATP to form Thr-AMP and then transferred to the acceptor end of tRNA(Thr). Also edits incorrectly charged L-seryl-tRNA(Thr). In Flavobacterium psychrophilum (strain ATCC 49511 / DSM 21280 / CIP 103535 / JIP02/86), this protein is Threonine--tRNA ligase.